The primary structure comprises 325 residues: Tetraacyldisaccharide 4'-kinase (325 aa).

Thr-55 to Thr-62 contacts ATP.

This sequence belongs to the LpxK family.

It carries out the reaction a lipid A disaccharide + ATP = a lipid IVA + ADP + H(+). Its pathway is glycolipid biosynthesis; lipid IV(A) biosynthesis; lipid IV(A) from (3R)-3-hydroxytetradecanoyl-[acyl-carrier-protein] and UDP-N-acetyl-alpha-D-glucosamine: step 6/6. Functionally, transfers the gamma-phosphate of ATP to the 4'-position of a tetraacyldisaccharide 1-phosphate intermediate (termed DS-1-P) to form tetraacyldisaccharide 1,4'-bis-phosphate (lipid IVA). In Salmonella agona (strain SL483), this protein is Tetraacyldisaccharide 4'-kinase.